Here is a 296-residue protein sequence, read N- to C-terminus: D-alanine--D-alanine ligase (296 aa).

The 191-residue stretch at 103–293 folds into the ATP-grasp domain; the sequence is KEILMHHRMP…FDSFVKRIIE (191 aa). 129–180 is a binding site for ATP; the sequence is ISFPVAVKPSSGGSSIATFKVKSIQELKHAYEEASKYGEVMIEQWVTGKEIT. 3 residues coordinate Mg(2+): D247, E260, and N262.

This sequence belongs to the D-alanine--D-alanine ligase family. It depends on Mg(2+) as a cofactor. Mn(2+) serves as cofactor.

The protein resides in the cytoplasm. It carries out the reaction 2 D-alanine + ATP = D-alanyl-D-alanine + ADP + phosphate + H(+). It functions in the pathway cell wall biogenesis; peptidoglycan biosynthesis. In terms of biological role, cell wall formation. The sequence is that of D-alanine--D-alanine ligase from Francisella tularensis subsp. novicida (strain U112).